A 104-amino-acid polypeptide reads, in one-letter code: L-rhamnose mutarotase (104 aa).

Tyrosine 18 serves as a coordination point for substrate. Residue histidine 22 is the Proton donor of the active site. Residues tyrosine 41 and 76-77 (WW) contribute to the substrate site.

Belongs to the rhamnose mutarotase family. In terms of assembly, homodimer.

Its subcellular location is the cytoplasm. The catalysed reaction is alpha-L-rhamnose = beta-L-rhamnose. It functions in the pathway carbohydrate metabolism; L-rhamnose metabolism. Involved in the anomeric conversion of L-rhamnose. This chain is L-rhamnose mutarotase, found in Salmonella agona (strain SL483).